The primary structure comprises 262 residues: Adenosylcobinamide-GDP ribazoletransferase (262 aa).

The next 6 membrane-spanning stretches (helical) occupy residues 43-63, 66-86, 120-140, 146-166, 191-211, and 242-262; these read YFGL…WLTQ, LPAG…TGGF, GALA…ELAL, AGSA…SIIF, LLIL…LAAL, and AAQQ…GNIL.

The protein belongs to the CobS family. The cofactor is Mg(2+).

The protein resides in the cell inner membrane. The catalysed reaction is alpha-ribazole + adenosylcob(III)inamide-GDP = adenosylcob(III)alamin + GMP + H(+). It carries out the reaction alpha-ribazole 5'-phosphate + adenosylcob(III)inamide-GDP = adenosylcob(III)alamin 5'-phosphate + GMP + H(+). Its pathway is cofactor biosynthesis; adenosylcobalamin biosynthesis; adenosylcobalamin from cob(II)yrinate a,c-diamide: step 7/7. In terms of biological role, joins adenosylcobinamide-GDP and alpha-ribazole to generate adenosylcobalamin (Ado-cobalamin). Also synthesizes adenosylcobalamin 5'-phosphate from adenosylcobinamide-GDP and alpha-ribazole 5'-phosphate. The sequence is that of Adenosylcobinamide-GDP ribazoletransferase from Shewanella baltica (strain OS195).